Reading from the N-terminus, the 357-residue chain is Probable nitronate monooxygenase (357 aa).

Residues asparagine 71, glutamine 175, glycine 180, glycine 219, and 238–241 (QMGT) contribute to the FMN site.

The protein belongs to the nitronate monooxygenase family. NMO class I subfamily. Requires FMN as cofactor.

It catalyses the reaction 3 propionate 3-nitronate + 3 O2 + H2O = 3 3-oxopropanoate + 2 nitrate + nitrite + H2O2 + 3 H(+). In terms of biological role, nitronate monooxygenase that uses molecular oxygen to catalyze the oxidative denitrification of alkyl nitronates. Acts on propionate 3-nitronate (P3N), the presumed physiological substrate. Probably functions in the detoxification of P3N, a metabolic poison produced by plants and fungi as a defense mechanism. This chain is Probable nitronate monooxygenase, found in Staphylococcus haemolyticus (strain JCSC1435).